The following is a 725-amino-acid chain: Kelch domain-containing protein SSO1033 (725 aa).

The N-terminal stretch at 1-28 (MKYGNMKKWAPLILFLFSLLLLQGISLH) is a signal peptide. 6 Kelch repeats span residues 59–100 (SLYI…VYNN), 101–145 (TIYV…VYNN), 146–199 (AIYV…FNGT), 201–248 (LIIV…YYRG), 250–297 (LFIV…QVGN), and 299–342 (LYLA…VTLG). Fibronectin type-III domains lie at 323-410 (PPLP…TPAS), 411-504 (VPNP…TKAS), 505-583 (VFAF…VVYY), and 585-665 (PPAS…TGDY).

The chain is Kelch domain-containing protein SSO1033 from Saccharolobus solfataricus (strain ATCC 35092 / DSM 1617 / JCM 11322 / P2) (Sulfolobus solfataricus).